The sequence spans 227 residues: ATP synthase F(0) complex subunit a (227 aa).

6 helical membrane-spanning segments follow: residues 14-34 (LLGIPLIAMAIMIPWLIFPTP), 69-89 (WATILTALMLFLITINLLGLL), 99-119 (LSLNMAFAIPLWLTTVLIGML), 137-157 (LLIPILIIIETISLFIRPLAL), 180-200 (FVLITIMPTVALLTSLILFLL), and 202-222 (ILEVAVAMIQAYVFVLLLSLY).

The protein belongs to the ATPase A chain family. As to quaternary structure, component of the ATP synthase complex composed at least of ATP5F1A/subunit alpha, ATP5F1B/subunit beta, ATP5MC1/subunit c (homooctomer), MT-ATP6/subunit a, MT-ATP8/subunit 8, ATP5ME/subunit e, ATP5MF/subunit f, ATP5MG/subunit g, ATP5MK/subunit k, ATP5MJ/subunit j, ATP5F1C/subunit gamma, ATP5F1D/subunit delta, ATP5F1E/subunit epsilon, ATP5PF/subunit F6, ATP5PB/subunit b, ATP5PD/subunit d, ATP5PO/subunit OSCP. ATP synthase complex consists of a soluble F(1) head domain (subunits alpha(3) and beta(3)) - the catalytic core - and a membrane F(0) domain - the membrane proton channel (subunits c, a, 8, e, f, g, k and j). These two domains are linked by a central stalk (subunits gamma, delta, and epsilon) rotating inside the F1 region and a stationary peripheral stalk (subunits F6, b, d, and OSCP). Interacts with DNAJC30; interaction is direct.

The protein localises to the mitochondrion inner membrane. It carries out the reaction H(+)(in) = H(+)(out). Functionally, subunit a, of the mitochondrial membrane ATP synthase complex (F(1)F(0) ATP synthase or Complex V) that produces ATP from ADP in the presence of a proton gradient across the membrane which is generated by electron transport complexes of the respiratory chain. ATP synthase complex consist of a soluble F(1) head domain - the catalytic core - and a membrane F(1) domain - the membrane proton channel. These two domains are linked by a central stalk rotating inside the F(1) region and a stationary peripheral stalk. During catalysis, ATP synthesis in the catalytic domain of F(1) is coupled via a rotary mechanism of the central stalk subunits to proton translocation. With the subunit c (ATP5MC1), forms the proton-conducting channel in the F(0) domain, that contains two crucial half-channels (inlet and outlet) that facilitate proton movement from the mitochondrial intermembrane space (IMS) into the matrix. Protons are taken up via the inlet half-channel and released through the outlet half-channel, following a Grotthuss mechanism. This chain is ATP synthase F(0) complex subunit a, found in Squalus acanthias (Spiny dogfish).